Reading from the N-terminus, the 393-residue chain is NAD(P)H-quinone oxidoreductase subunit H, chloroplastic (393 aa).

Belongs to the complex I 49 kDa subunit family. As to quaternary structure, NDH is composed of at least 16 different subunits, 5 of which are encoded in the nucleus.

It localises to the plastid. It is found in the chloroplast thylakoid membrane. It carries out the reaction a plastoquinone + NADH + (n+1) H(+)(in) = a plastoquinol + NAD(+) + n H(+)(out). The enzyme catalyses a plastoquinone + NADPH + (n+1) H(+)(in) = a plastoquinol + NADP(+) + n H(+)(out). In terms of biological role, NDH shuttles electrons from NAD(P)H:plastoquinone, via FMN and iron-sulfur (Fe-S) centers, to quinones in the photosynthetic chain and possibly in a chloroplast respiratory chain. The immediate electron acceptor for the enzyme in this species is believed to be plastoquinone. Couples the redox reaction to proton translocation, and thus conserves the redox energy in a proton gradient. This Sorghum bicolor (Sorghum) protein is NAD(P)H-quinone oxidoreductase subunit H, chloroplastic.